A 144-amino-acid chain; its full sequence is Transcriptional regulator SlyA (144 aa).

The 134-residue stretch at 2-135 (ESPLGSDLSR…LSQMISKLEK (134 aa)) folds into the HTH marR-type domain. Positions 49–72 (QIQLAKAIGIEQPSLVRTLDQLEE) form a DNA-binding region, H-T-H motif.

It belongs to the SlyA family. In terms of assembly, homodimer.

Functionally, transcription regulator that can specifically activate or repress expression of target genes. This Wigglesworthia glossinidia brevipalpis protein is Transcriptional regulator SlyA.